A 434-amino-acid polypeptide reads, in one-letter code: UDP-N-acetylglucosamine 1-carboxyvinyltransferase (434 aa).

22–23 (KN) is a phosphoenolpyruvate binding site. R93 is a binding site for UDP-N-acetyl-alpha-D-glucosamine. C117 (proton donor) is an active-site residue. C117 is modified (2-(S-cysteinyl)pyruvic acid O-phosphothioketal). UDP-N-acetyl-alpha-D-glucosamine contacts are provided by D307 and V329.

It belongs to the EPSP synthase family. MurA subfamily.

The protein resides in the cytoplasm. The enzyme catalyses phosphoenolpyruvate + UDP-N-acetyl-alpha-D-glucosamine = UDP-N-acetyl-3-O-(1-carboxyvinyl)-alpha-D-glucosamine + phosphate. It functions in the pathway cell wall biogenesis; peptidoglycan biosynthesis. In terms of biological role, cell wall formation. Adds enolpyruvyl to UDP-N-acetylglucosamine. The chain is UDP-N-acetylglucosamine 1-carboxyvinyltransferase from Coxiella burnetii (strain CbuG_Q212) (Coxiella burnetii (strain Q212)).